The chain runs to 318 residues: Small ribosomal subunit protein uS3 (318 aa).

One can recognise a KH type-2 domain in the interval 17 to 86; the sequence is MDEYFAEQLS…NPQIDAQEVK (70 aa). Residues 198–229 show a composition bias toward basic and acidic residues; sequence SVEVEEPAEKPAEKPAEKPAEKAAAPKKEAAK. The tract at residues 198–275 is disordered; sequence SVEVEEPAEK…VQAETSEEIE (78 aa). A compositionally biased stretch (pro residues) spans 234–250; sequence APAPEAPAPAPEAPAPA. Residues 253 to 275 are compositionally biased toward acidic residues; it reads EEAEVAEPEEAEEVQAETSEEIE.

Belongs to the universal ribosomal protein uS3 family. As to quaternary structure, part of the 30S ribosomal subunit.

Binds the lower part of the 30S subunit head. The polypeptide is Small ribosomal subunit protein uS3 (Methanosarcina acetivorans (strain ATCC 35395 / DSM 2834 / JCM 12185 / C2A)).